The following is a 280-amino-acid chain: Nucleotide-binding protein Mfla_0145 (280 aa).

Position 8 to 15 (8 to 15 (GLSGSGKS)) interacts with ATP. 57–60 (DTRS) contributes to the GTP binding site.

It belongs to the RapZ-like family.

Displays ATPase and GTPase activities. The protein is Nucleotide-binding protein Mfla_0145 of Methylobacillus flagellatus (strain ATCC 51484 / DSM 6875 / VKM B-1610 / KT).